A 65-amino-acid polypeptide reads, in one-letter code: Large ribosomal subunit protein bL31 (65 aa).

Positions 16, 18, 36, and 39 each coordinate Zn(2+).

Belongs to the bacterial ribosomal protein bL31 family. Type A subfamily. Part of the 50S ribosomal subunit. The cofactor is Zn(2+).

Binds the 23S rRNA. The chain is Large ribosomal subunit protein bL31 from Geotalea daltonii (strain DSM 22248 / JCM 15807 / FRC-32) (Geobacter daltonii).